We begin with the raw amino-acid sequence, 913 residues long: Sterol uptake control protein 2 (913 aa).

The zn(2)-C6 fungal-type DNA-binding region spans 50–80 (GCDNCKRRRVKCDEGKPACRKCTNMKLECQY). Disordered regions lie at residues 103 to 173 (GSVE…SMGL) and 216 to 258 (GNMG…LAGS). Threonine 122 bears the Phosphothreonine mark. Over residues 150 to 164 (SESEEKSSAPIEDKN) the composition is skewed to basic and acidic residues. The span at 222 to 241 (QLQQQQQVQQQSQPQTQAQQ) shows a compositional bias: low complexity. Residues 303-346 (QQHQQVQLQQYQQLRQEQHQQVQQQQQEQLQQYQQHFLQQQQQV) are a coiled coil. 2 disordered regions span residues 347-385 (LLQQ…TLNS) and 453-489 (MQEH…GSAS). Residues 374–385 (LQSQTSETTLNS) are compositionally biased toward polar residues. Positions 440–472 (ATKASNAEEALANMQEHHERAAASVKENDGQLS) form a coiled coil. Residues 454–468 (QEHHERAAASVKEND) are compositionally biased toward basic and acidic residues. A compositionally biased stretch (polar residues) spans 469 to 487 (GQLSDTKSPAPSNNAQGGS). Serine 519 is modified (phosphoserine). Residues 552-562 (EPTISLQTSQT) are compositionally biased toward polar residues. The tract at residues 552-571 (EPTISLQTSQTENEDDASRQ) is disordered.

The protein localises to the nucleus. Transcription factor that is involved in activation of anaerobic genes such as DAN/TIR cell wall mannoprotein genes and YML083c. Appears to bind to anaerobic response elements (AR1) with the consensus sequence 5'-TCGTTYAG-3' present in the promoter regions of DAN/TIR genes. Involved in sterol uptake and regulation of the sterol biosynthesis. Binds to sterol regulatory elements (SRE) with the consensus sequence 5'-TCGTATA-3' present in ERG2 and ERG3 promoters. May be involved in down-regulation of CWP2 during anaerobic adaptation. The sequence is that of Sterol uptake control protein 2 (UPC2) from Saccharomyces cerevisiae (strain ATCC 204508 / S288c) (Baker's yeast).